We begin with the raw amino-acid sequence, 200 residues long: Small ribosomal subunit protein uS5 (200 aa).

A compositionally biased stretch (basic and acidic residues) spans 1–22 (MAEERGEKRGRRRDRENPRDRD). Positions 1-26 (MAEERGEKRGRRRDRENPRDRDDESS) are disordered. In terms of domain architecture, S5 DRBM spans 28–91 (LVDKLVGINR…EEAKRNLVRI (64 aa)).

This sequence belongs to the universal ribosomal protein uS5 family. As to quaternary structure, part of the 30S ribosomal subunit. Contacts proteins S4 and S8.

Its function is as follows. With S4 and S12 plays an important role in translational accuracy. In terms of biological role, located at the back of the 30S subunit body where it stabilizes the conformation of the head with respect to the body. This Hyphomonas neptunium (strain ATCC 15444) protein is Small ribosomal subunit protein uS5.